The sequence spans 692 residues: MTDRVKSLQLLFDRPNEPLITPKGENGAIFQLTQDLLPVDYEDNGIALNNRFGEEADEKIPLKPLSNPPQFPIASQLPTDADFSLFLPRHQEMATEVIDVLMNIPENQLDDLLSSCVYARGRLNPQLFNYCYSVVLMHRRDTRNVPIQNFAETFPSKFLDSQAFAQARETAAVFPRGIPRTPIIIPRDYTATDLEEEHRLAYWREDIGINLHHWQWHLVYPFTASDRSIVAKDRRGELFFYMHQQIIARYNCERINNSLKRVKKFNNWREPIPEAYFPKLDSLTSSRGWPPRQANMTWQDLNRPVDGLNVTISDMERWRRNLEEAVSMGTVTLPDGSTRPLDIDTLGNMVEASILSPNRELYGSVHNNGHSFSAYVHDPSHRYLENFGVIADEATTMRDPFFYRWHAWVDDLFQKHKESNFVRPYSRSELENPGVQVTSVSVETQGSPQNVLSTFWMSSDVDLSRGLDFSNRGPVYARFTHLNHRPFRYVIKVNNSGNARRTTVRIFISPKFDERNLAWSLVDQRKMFIEMDRFVTPLKAGENTITRQSTESTFTIPFEQTFRDLSVQADDPRRVDLAAFNFCGCGWPQHMLVPKGTEAGAPYVFFVMLSNYDLDRIDEPGNSPEISCKEASSFCGLRDRKYPDKRAMGFPFDRPSRTATSIEDFILPNMALQDITIRLNNVVEANPRNPRT.

The propeptide occupies 1 to 97 (MTDRVKSLQL…PRHQEMATEV (97 aa)). Cu cation is bound by residues histidine 213, histidine 217, and histidine 243. Asparagine 256, asparagine 295, and asparagine 309 each carry an N-linked (GlcNAc...) asparagine glycan. Glutamate 351 functions as the Proton acceptor in the catalytic mechanism. 3 residues coordinate Cu cation: histidine 366, histidine 370, and histidine 406. Asparagine 494 is a glycosylation site (N-linked (GlcNAc...) asparagine). Intrachain disulfides connect cysteine 583–cysteine 628 and cysteine 585–cysteine 635.

It belongs to the tyrosinase family. As to quaternary structure, heterodimer. Cu(2+) serves as cofactor.

It is found in the secreted. The catalysed reaction is L-tyrosine + O2 = L-dopaquinone + H2O. The enzyme catalyses 2 L-dopa + O2 = 2 L-dopaquinone + 2 H2O. Copper-containing oxidase that functions in the formation of pigments such as melanins and other polyphenolic compounds. Catalyzes the rate-limiting conversions of tyrosine to DOPA, DOPA to DOPA-quinone and possibly 5,6 dihydroxyindole to indole-5'6 quinone. Binds to the surface of hemocytes and is involved in hemocyte melanization. Binds the A.niger cell wall component alpha-1,3-glucan, a fungal pathogen-associated molecular pattern (PAMP) that activates the host immune response. This chain is Phenoloxidase subunit 2, found in Galleria mellonella (Greater wax moth).